Here is a 53-residue protein sequence, read N- to C-terminus: Light-harvesting protein B800/850/890 beta-1 chain (53 aa).

Over 1 to 19 (ADNMSLTGLSDEEAKEFHS) the chain is Cytoplasmic. A bacteriochlorophyll-binding residues include histidine 18 and histidine 36. A helical membrane pass occupies residues 20–42 (IFMQSFLIFTAVAVVAHFLAWAW). Residues 43-53 (RPWIPGAEGYG) are Periplasmic-facing.

This sequence belongs to the antenna complex beta subunit family. As to quaternary structure, the core complex is formed by different alpha and beta chains, binding bacteriochlorophyll molecules, and arranged most probably in tetrameric structures disposed around the reaction center. The non-pigmented gamma chains may constitute additional components.

The protein localises to the cell inner membrane. Antenna complexes are light-harvesting systems, which transfer the excitation energy to the reaction centers. The polypeptide is Light-harvesting protein B800/850/890 beta-1 chain (Halorhodospira halophila (strain DSM 244 / SL1) (Ectothiorhodospira halophila (strain DSM 244 / SL1))).